The following is a 383-amino-acid chain: Na(+)/H(+) antiporter NhaA (383 aa).

The next 11 helical transmembrane spans lie at 19 to 39 (AGGVILMVTAALALVIANSPL), 56 to 76 (VLHGINDGLMAVFFLLVGLEI), 92 to 112 (ILPGLAALGGMVVPALVFLAL), 122 to 142 (GWAVPTATDIAFALGVLALLG), 151 to 171 (IFLTALAIIDDLGAVLVIALF), 174 to 194 (AKLSWPALVAVAAILALLAAL), 212 to 232 (LWGAMLQSGVHATVAGIALAL), 255 to 275 (VGYGIVPIFGFANAGVSFAGL), 292 to 312 (LLFGKQIGVFGTAWMAIWLGF), 326 to 346 (GVAVLCGIGFTMSLFIGALAF), and 356 to 376 (VKVGVLAGSALSAILGSLVLL).

It belongs to the NhaA Na(+)/H(+) (TC 2.A.33) antiporter family.

It localises to the cell inner membrane. The catalysed reaction is Na(+)(in) + 2 H(+)(out) = Na(+)(out) + 2 H(+)(in). In terms of biological role, na(+)/H(+) antiporter that extrudes sodium in exchange for external protons. In Paramagnetospirillum magneticum (strain ATCC 700264 / AMB-1) (Magnetospirillum magneticum), this protein is Na(+)/H(+) antiporter NhaA.